We begin with the raw amino-acid sequence, 84 residues long: U4-theraphotoxin-Hhn1a (84 aa).

Residues 1 to 22 (MKVTLIAILTCAAVLVLHTTAA) form the signal peptide. Residues 23–47 (EELEESQLMEVGMPDTELEAVDEER) constitute a propeptide that is removed on maturation. 3 cysteine pairs are disulfide-bonded: cysteine 51–cysteine 65, cysteine 55–cysteine 76, and cysteine 70–cysteine 81.

It belongs to the neurotoxin 12 (Hwtx-2) family. 02 (Hwtx-2) subfamily. As to expression, expressed by the venom gland.

It is found in the secreted. Its function is as follows. Postsynaptic neurotoxin. The chain is U4-theraphotoxin-Hhn1a from Cyriopagopus hainanus (Chinese bird spider).